We begin with the raw amino-acid sequence, 337 residues long: Glyceraldehyde-3-phosphate dehydrogenase (337 aa).

NAD(+)-binding positions include 13–14, D35, and K80; that span reads RI. D-glyceraldehyde 3-phosphate-binding positions include 151–153, T182, 211–212, and R234; these read SCT and TG. Catalysis depends on C152, which acts as the Nucleophile. NAD(+) is bound at residue N316.

It belongs to the glyceraldehyde-3-phosphate dehydrogenase family. In terms of assembly, homotetramer.

It is found in the cytoplasm. It carries out the reaction D-glyceraldehyde 3-phosphate + phosphate + NAD(+) = (2R)-3-phospho-glyceroyl phosphate + NADH + H(+). It functions in the pathway carbohydrate degradation; glycolysis; pyruvate from D-glyceraldehyde 3-phosphate: step 1/5. The polypeptide is Glyceraldehyde-3-phosphate dehydrogenase (GAPD) (Mycosarcoma maydis (Corn smut fungus)).